Here is a 230-residue protein sequence, read N- to C-terminus: Thymidylate kinase (230 aa).

An ATP-binding site is contributed by 20 to 27 (GGEGAGKS).

The protein belongs to the thymidylate kinase family.

It carries out the reaction dTMP + ATP = dTDP + ADP. Its function is as follows. Phosphorylation of dTMP to form dTDP in both de novo and salvage pathways of dTTP synthesis. This chain is Thymidylate kinase, found in Rhodopseudomonas palustris (strain BisB18).